We begin with the raw amino-acid sequence, 48 residues long: M-oxotoxin-Ot1b (48 aa).

The protein resides in the secreted. Its subcellular location is the target cell membrane. In terms of biological role, disrupts cell membranes, particularly those rich in phosphocholine, through formation of pores. Has antimicrobial activity, hemolytic activity and insecticidal activity. The polypeptide is M-oxotoxin-Ot1b (Oxyopes takobius (Lynx spider)).